The following is a 245-amino-acid chain: Flavin mononucleotide hydrolase 1, chloroplatic (245 aa).

The transit peptide at 1–26 (MAAAAMHTSAEFINLKPNMWKKNPVR) directs the protein to the chloroplast.

Belongs to the HAD-like hydrolase superfamily. DOG/GPP family. As to quaternary structure, homodimer. Requires Mg(2+) as cofactor.

It localises to the plastid. It is found in the chloroplast stroma. The enzyme catalyses FMN + H2O = riboflavin + phosphate. The catalysed reaction is 5-amino-6-(5-phospho-D-ribitylamino)uracil + H2O = 5-amino-6-(D-ribitylamino)uracil + phosphate. FMN hydrolase that catalyzes the dephosphorylation of flavin mononucleotide (FMN) to riboflavin. Can also dephosphorylate 5-amino-6-(5-phospho-D-ribitylamino)uracil, also known as ARPP. Not required for riboflavin biosynthesis in planta, but may help maintaining flavin homeostasis within chloroplasts. The polypeptide is Flavin mononucleotide hydrolase 1, chloroplatic (Arabidopsis thaliana (Mouse-ear cress)).